The sequence spans 398 residues: UPF0496 protein At5g66660 (398 aa).

2 consecutive transmembrane segments (helical) span residues 240-260 (VFFA…TTMS) and 263-283 (PVVC…GKWF).

This sequence belongs to the UPF0496 family.

It localises to the membrane. The polypeptide is UPF0496 protein At5g66660 (Arabidopsis thaliana (Mouse-ear cress)).